Here is a 660-residue protein sequence, read N- to C-terminus: Macrolide export ATP-binding/permease protein MacB (660 aa).

Residues 10-248 (LVLENIVRKF…TDSQALYGKQ (239 aa)) form the ABC transporter domain. 46-53 (GASGSGKS) is an ATP binding site. A run of 4 helical transmembrane segments spans residues 285 to 305 (FLTM…VALG), 532 to 552 (ILTL…GIGV), 593 to 613 (VIGG…FLLF), and 625 to 645 (SIIL…FSPA).

It belongs to the ABC transporter superfamily. Macrolide exporter (TC 3.A.1.122) family. Homodimer.

Its subcellular location is the cell inner membrane. In terms of biological role, non-canonical ABC transporter that contains transmembrane domains (TMD), which form a pore in the inner membrane, and an ATP-binding domain (NBD), which is responsible for energy generation. Confers resistance against macrolides. In Bartonella henselae (strain ATCC 49882 / DSM 28221 / CCUG 30454 / Houston 1) (Rochalimaea henselae), this protein is Macrolide export ATP-binding/permease protein MacB.